The following is a 155-amino-acid chain: Ciliary microtubule inner protein 2C (155 aa).

Belongs to the CIMIP2 family.

The protein localises to the cytoplasm. It localises to the cytoskeleton. Its subcellular location is the cilium axoneme. In terms of biological role, microtubule inner protein (MIP) part of the dynein-decorated doublet microtubules (DMTs) in cilia axoneme, which is required for motile cilia beating. The polypeptide is Ciliary microtubule inner protein 2C (cimip2c) (Xenopus tropicalis (Western clawed frog)).